Reading from the N-terminus, the 34-residue chain is Cytochrome b6-f complex subunit 8 (34 aa).

A helical membrane pass occupies residues 3-23; sequence LLTFGWAALLAVFTFSLAMVV.

It belongs to the PetN family. As to quaternary structure, the 4 large subunits of the cytochrome b6-f complex are cytochrome b6, subunit IV (17 kDa polypeptide, PetD), cytochrome f and the Rieske protein, while the 4 small subunits are PetG, PetL, PetM and PetN. The complex functions as a dimer.

It is found in the cellular thylakoid membrane. Its function is as follows. Component of the cytochrome b6-f complex, which mediates electron transfer between photosystem II (PSII) and photosystem I (PSI), cyclic electron flow around PSI, and state transitions. This Synechococcus elongatus (strain ATCC 33912 / PCC 7942 / FACHB-805) (Anacystis nidulans R2) protein is Cytochrome b6-f complex subunit 8.